The sequence spans 477 residues: MVRWSRWFMANSHKDVGTMYLMLGMWSGFGGLNLSWMMRLELSRPGMWLPSSEVYNGIVTLHAIMMIFSFVMPVLIGGFGNWLLPMMLGSIDMSFPRLNTFSFWVLPPALYLVIVSCFIDYGSGTGWTMYPVPLSSTPYSGGISTDLMILGLHLAGISSSAESINYLVTFLNVRSKSFKAEFSPLFVWALAVTSFLLLVSLPVLAGGLTMLIMDRDFNCSFFDPSGGGDPVLFQHLFWFFGHPEVYVLILPGFGLVSHVLVFYTKKLRVFGSVAMMYAMISIGVLGFIVWGHHMYTVGLDVDTRFYFTAVTMLIAVPTGVKVFSWIATIYGSYLSFEAPTLWVLGFIMKFTMGGITGVILSNACLDVALHDTYYVVAHFHYVLSMGAVFTIFAGYIHYFPFFTSKLFSPVLARGHFFLTFVGVNLTFFPQHFLGLGGMPRRIPDYPIFYYYWNQWSTIGCAMVMVSVSLFIHMQWEA.

The helical transmembrane segment at 16–36 (VGTMYLMLGMWSGFGGLNLSW) threads the bilayer. Ca(2+) contacts are provided by Glu-41 and Gly-46. Position 62 (His-62) interacts with Fe(II)-heme a. A run of 6 helical transmembrane segments spans residues 64–84 (IMMI…NWLL), 101–121 (FSFW…FIDY), 149–171 (ILGL…VTFL), 185–205 (LFVW…PVLA), 236–256 (LFWF…FGLV), and 269–289 (VFGS…GFIV). Residue His-242 coordinates Cu cation. Residues 242 to 246 (HPEVY) constitute a cross-link (1'-histidyl-3'-tyrosine (His-Tyr)). Tyr-246 serves as a coordination point for O2. His-292 and His-293 together coordinate Cu cation. The next 2 helical transmembrane spans lie at 309–329 (AVTM…IATI) and 340–360 (TLWV…GVIL). Residues His-370 and Asp-371 each contribute to the Mg(2+) site. Residue His-378 participates in heme a3 binding. Fe(II)-heme a is bound at residue His-380. The next 2 membrane-spanning stretches (helical) occupy residues 382 to 402 (VLSM…FPFF) and 416 to 436 (FFLT…LGLG). Pro-443 serves as a coordination point for Ca(2+). The helical transmembrane segment at 455–475 (WSTIGCAMVMVSVSLFIHMQW) threads the bilayer.

Belongs to the heme-copper respiratory oxidase family. In terms of assembly, component of the cytochrome c oxidase (complex IV, CIV), a multisubunit enzyme composed of a catalytic core of 3 subunits and several supernumerary subunits. The complex exists as a monomer or a dimer and forms supercomplexes (SCs) in the inner mitochondrial membrane with ubiquinol-cytochrome c oxidoreductase (cytochrome b-c1 complex, complex III, CIII). The cofactor is heme. It depends on Cu cation as a cofactor.

The protein localises to the mitochondrion inner membrane. The catalysed reaction is 4 Fe(II)-[cytochrome c] + O2 + 8 H(+)(in) = 4 Fe(III)-[cytochrome c] + 2 H2O + 4 H(+)(out). Its pathway is energy metabolism; oxidative phosphorylation. Component of the cytochrome c oxidase, the last enzyme in the mitochondrial electron transport chain which drives oxidative phosphorylation. The respiratory chain contains 3 multisubunit complexes succinate dehydrogenase (complex II, CII), ubiquinol-cytochrome c oxidoreductase (cytochrome b-c1 complex, complex III, CIII) and cytochrome c oxidase (complex IV, CIV), that cooperate to transfer electrons derived from NADH and succinate to molecular oxygen, creating an electrochemical gradient over the inner membrane that drives transmembrane transport and the ATP synthase. Cytochrome c oxidase is the component of the respiratory chain that catalyzes the reduction of oxygen to water. Electrons originating from reduced cytochrome c in the intermembrane space (IMS) are transferred via the dinuclear copper A center (CU(A)) of subunit 2 and heme A of subunit 1 to the active site in subunit 1, a binuclear center (BNC) formed by heme A3 and copper B (CU(B)). The BNC reduces molecular oxygen to 2 water molecules using 4 electrons from cytochrome c in the IMS and 4 protons from the mitochondrial matrix. The protein is Cytochrome c oxidase subunit 1 (COI) of Pecten maximus (King scallop).